The primary structure comprises 123 residues: Large ribosomal subunit protein uL29 (123 aa).

Belongs to the universal ribosomal protein uL29 family.

In Babesia bovis, this protein is Large ribosomal subunit protein uL29 (RPL35).